The primary structure comprises 410 residues: MKEKTIIIVGGGQAAAMAAASLRQQGFTGELHLFSDERHLPYERPPLSKSMLLEDSPQLQQVLPANWWQENNVHLHSGVTIKTLGRDTRELVLTNGESWHWDQLFIATGAAARPLPLLDALGERCFTLHHAGDAARLREVLQPERSVVIVGAGTIGLELAASATQRSAAQRSAAQRRCKVTVIELAATVMGRNAPPPVQRYLLQRHQQAGVRILLNNAIEHVVDGEKVELTLQSGETLQADVVIYGIGISANEQLAREANLDTANGIVIDEACRTCDPAIFAGGDVAITRLDNGALHRCESWENANNQAQIAAAAMLGLPLPLLPPPWFWSDQYSDNLQFIGDMRGDDWLCRGNPETQKAIWFNLQNGVLIGAVTLNQGREIRPIRKWIQSGKTFDAKLLIDENIALKSL.

5-36 lines the FAD pocket; the sequence is TIIIVGGGQAAAMAAASLRQQGFTGELHLFSD. Position 146–184 (146–184) interacts with NAD(+); it reads SVVIVGAGTIGLELAASATQRSAAQRSAAQRRCKVTVIE.

The protein belongs to the bacterial ring-hydroxylating dioxygenase ferredoxin reductase family. This dioxygenase system consists of four proteins: the two subunits of the hydroxylase component (HcaE and HcaF), a ferredoxin (HcaC) and a ferredoxin reductase (HcaD). It depends on FAD as a cofactor.

The catalysed reaction is 2 reduced [2Fe-2S]-[ferredoxin] + NAD(+) + H(+) = 2 oxidized [2Fe-2S]-[ferredoxin] + NADH. It functions in the pathway aromatic compound metabolism; 3-phenylpropanoate degradation. Functionally, part of the multicomponent 3-phenylpropionate dioxygenase, that converts 3-phenylpropionic acid (PP) and cinnamic acid (CI) into 3-phenylpropionate-dihydrodiol (PP-dihydrodiol) and cinnamic acid-dihydrodiol (CI-dihydrodiol), respectively. The sequence is that of 3-phenylpropionate/cinnamic acid dioxygenase ferredoxin--NAD(+) reductase component from Shigella flexneri serotype 5b (strain 8401).